The sequence spans 233 residues: Purine nucleoside phosphorylase DeoD-type (233 aa).

Residue H4 coordinates a purine D-ribonucleoside. Residues G20, R24, R43, and 87–90 (RVGT) contribute to the phosphate site. Residues 178–180 (EME) and 202–203 (SD) each bind a purine D-ribonucleoside. D203 functions as the Proton donor in the catalytic mechanism.

The protein belongs to the PNP/UDP phosphorylase family. Homohexamer; trimer of homodimers.

The catalysed reaction is a purine D-ribonucleoside + phosphate = a purine nucleobase + alpha-D-ribose 1-phosphate. It carries out the reaction a purine 2'-deoxy-D-ribonucleoside + phosphate = a purine nucleobase + 2-deoxy-alpha-D-ribose 1-phosphate. Its function is as follows. Catalyzes the reversible phosphorolytic breakdown of the N-glycosidic bond in the beta-(deoxy)ribonucleoside molecules, with the formation of the corresponding free purine bases and pentose-1-phosphate. The sequence is that of Purine nucleoside phosphorylase DeoD-type from Listeria innocua serovar 6a (strain ATCC BAA-680 / CLIP 11262).